The following is a 212-amino-acid chain: External core antigen (212 aa).

A signal peptide spans 1–19 (MQLFHLCLVISCSCPTVQA). Positions 25–27 (GWL) are HBEAG. Positions 165-212 (NAPILSTLPETTVVRRRGRSPRRRTPSPRRRRSQSPRRRRSQSRESQC) are disordered. Over residues 178 to 205 (VRRRGRSPRRRTPSPRRRRSQSPRRRRS) the composition is skewed to basic residues. The 1; half-length repeat unit spans residues 184 to 190 (SPRRRTP). The segment at 184 to 206 (SPRRRTPSPRRRRSQSPRRRRSQ) is 3 X 8 AA repeats of S-P-R-R-R-R-S-Q. A propeptide spanning residues 184–212 (SPRRRTPSPRRRRSQSPRRRRSQSRESQC) is cleaved from the precursor. A run of 2 repeats spans residues 191–198 (SPRRRRSQ) and 199–206 (SPRRRRSQ).

It belongs to the orthohepadnavirus precore antigen family. In terms of assembly, homodimerizes. In terms of processing, phosphorylated. Post-translationally, cleaved by host furin.

It localises to the secreted. It is found in the host nucleus. May regulate immune response to the intracellular capsid in acting as a T-cell tolerogen, by having an immunoregulatory effect which prevents destruction of infected cells by cytotoxic T-cells. This immune regulation may predispose to chronicity during perinatal infections and prevent severe liver injury during adult infections. This chain is External core antigen, found in Hepatitis B virus genotype B1 subtype adw (isolate Japan/pJDW233/1988) (HBV-B).